A 130-amino-acid polypeptide reads, in one-letter code: Small ribosomal subunit protein uS9 (130 aa).

Belongs to the universal ribosomal protein uS9 family.

In Pseudomonas fluorescens (strain ATCC BAA-477 / NRRL B-23932 / Pf-5), this protein is Small ribosomal subunit protein uS9.